The sequence spans 405 residues: Multidrug resistance protein MdtA (405 aa).

Positions 1-22 (MKTPRRFPLIALTVAAVLTAAA) are cleaved as a signal peptide. Positions 35 to 52 (VQNRQGTEQQRASNSQGS) are enriched in polar residues. Residues 35 to 62 (VQNRQGTEQQRASNSQGSAKRAGNAPPV) form a disordered region.

It belongs to the membrane fusion protein (MFP) (TC 8.A.1) family. As to quaternary structure, part of a tripartite efflux system composed of MdtA, MdtB and MdtC.

It localises to the cell inner membrane. This chain is Multidrug resistance protein MdtA, found in Erwinia amylovora (strain ATCC 49946 / CCPPB 0273 / Ea273 / 27-3).